The sequence spans 291 residues: GTPase Era (291 aa).

Residues 2–167 form the Era-type G domain; sequence KSGFVSIIGR…LDEIVKYLDE (166 aa). A G1 region spans residues 10–17; that stretch reads GRTNAGKS. 10–17 contacts GTP; sequence GRTNAGKS. The G2 stretch occupies residues 36-40; it reads NATRR. The segment at 57–60 is G3; it reads DTPG. GTP is bound by residues 57–61 and 116–119; these read DTPGL and NKVD. The G4 stretch occupies residues 116 to 119; sequence NKVD. The tract at residues 146-148 is G5; that stretch reads YSS. The region spanning 186–274 is the KH type-2 domain; that stretch reads YRDFILESIY…LLKLFVTVKK (89 aa).

Belongs to the TRAFAC class TrmE-Era-EngA-EngB-Septin-like GTPase superfamily. Era GTPase family. As to quaternary structure, monomer.

It localises to the cytoplasm. The protein localises to the cell inner membrane. Its function is as follows. An essential GTPase that binds both GDP and GTP, with rapid nucleotide exchange. Plays a role in 16S rRNA processing and 30S ribosomal subunit biogenesis and possibly also in cell cycle regulation and energy metabolism. This Campylobacter jejuni subsp. jejuni serotype O:23/36 (strain 81-176) protein is GTPase Era.